Consider the following 206-residue polypeptide: Small ribosomal subunit protein uS4 (206 aa).

In terms of domain architecture, S4 RNA-binding spans 96 to 156; that stretch reads GRLDNVVYRM…EKAKKQARIK (61 aa).

Belongs to the universal ribosomal protein uS4 family. Part of the 30S ribosomal subunit. Contacts protein S5. The interaction surface between S4 and S5 is involved in control of translational fidelity.

Its function is as follows. One of the primary rRNA binding proteins, it binds directly to 16S rRNA where it nucleates assembly of the body of the 30S subunit. Functionally, with S5 and S12 plays an important role in translational accuracy. This chain is Small ribosomal subunit protein uS4, found in Aeromonas salmonicida (strain A449).